The primary structure comprises 953 residues: Coatomer subunit beta (953 aa).

The residue at position 2 (Thr-2) is an N-acetylthreonine. HEAT repeat units follow at residues 96–131 (HEMI…KEAE), 132–168 (LLEP…NFEN), 240–276 (SERA…SAPT), 277–314 (AIKA…HPAH), 316–353 (RVLQ…SRNV), and 396–433 (DMAA…RFDN). Lys-494 carries the N6-acetyllysine modification.

Oligomeric complex that consists of at least the alpha, beta, beta', gamma, delta, epsilon and zeta subunits. Interacts with SCYL1. Interacts with CAPN8. Interacts with COPG1. Interacts with ARF1 (myristoylated); this interaction is required for binding of COPB1 to Golgi membranes. Interacts (via trunk domain) with ARF1 (via switch I region); the interaction is direct. Interacts with KCNK2 (via N-terminus); this interaction increases the channel-mediated whole cell currents and promotes plasma membrane expression of KCNK2. Interacts with PRKCE. Interacts with STX17. Interacts with TMEM115. Interacts with TMEM41B. Proteolytically cleaved between Ser-528 and Ser-529 by CAPN8.

The protein localises to the cytoplasm. It is found in the golgi apparatus membrane. Its subcellular location is the cytoplasmic vesicle. The protein resides in the COPI-coated vesicle membrane. It localises to the cell membrane. The protein localises to the endoplasmic reticulum-Golgi intermediate compartment. It is found in the microsome membrane. Functionally, the coatomer is a cytosolic protein complex that binds to dilysine motifs and reversibly associates with Golgi non-clathrin-coated vesicles, which further mediate biosynthetic protein transport from the ER, via the Golgi up to the trans Golgi network. Coatomer complex is required for budding from Golgi membranes, and is essential for the retrograde Golgi-to-ER transport of dilysine-tagged proteins. In mammals, the coatomer can only be recruited by membranes associated to ADP-ribosylation factors (ARFs), which are small GTP-binding proteins; the complex also influences the Golgi structural integrity, as well as the processing, activity, and endocytic recycling of LDL receptors. Involved in the Golgi disassembly and reassembly processes during cell cycle. Involved in autophagy by playing a role in early endosome function. Plays a role in organellar compartmentalization of secretory compartments including endoplasmic reticulum (ER)-Golgi intermediate compartment (ERGIC), Golgi, trans-Golgi network (TGN) and recycling endosomes, and in biosynthetic transport of CAV1. Plays a functional role in facilitating the transport of kappa-type opioid receptor mRNAs into axons and enhances translation of these proteins in the axonal compartment of dorsal root ganglion (DRG) cells. Required for limiting lipid storage in lipid droplets. Involved in lipid homeostasis by regulating the presence of perilipin family members PLIN2 and PLIN3 at the lipid droplet surface and promoting the association of adipocyte triglyceride lipase (PNPLA2) with the lipid droplet surface to mediate lipolysis. In Rattus norvegicus (Rat), this protein is Coatomer subunit beta (Copb1).